The primary structure comprises 150 residues: uncharacterized protein (150 aa).

Helical transmembrane passes span 12 to 30, 40 to 62, 74 to 96, and 106 to 128; these read IVQR…YFLF, RLLS…LVLF, IRRT…VLSG, and ALID…SRAV.

It is found in the cell membrane. This is an uncharacterized protein from Archaeoglobus fulgidus (strain ATCC 49558 / DSM 4304 / JCM 9628 / NBRC 100126 / VC-16).